Reading from the N-terminus, the 433-residue chain is Steroid hormone receptor ERR2 (433 aa).

Residues 1–41 (MSSEDRHLGSSCGSFIKTEPSSPSSGIDALSHHSPSGSSDA) form a disordered region. Positions 32–41 (HHSPSGSSDA) are enriched in low complexity. The interaction with NANOG stretch occupies residues 93-211 (YMLNAIPKRL…SPPAKKPLTK (119 aa)). The nuclear receptor DNA-binding region spans 100 to 186 (KRLCLVCGDI…RVRGGRQKYK (87 aa)). NR C4-type zinc fingers lie at residues 103–123 (CLVCGDIASGYHYGVASCEAC) and 139–163 (CPATNECEITKRRRKSCQACRFMKC). The tract at residues 203–433 (PPAKKPLTKI…LFLEMLEAKV (231 aa)) is essential for ESRRB transcriptional activity and interaction with NCOA3. The NR LBD domain maps to 208-432 (PLTKIVSYLL…KLFLEMLEAK (225 aa)).

It belongs to the nuclear hormone receptor family. NR3 subfamily. In terms of assembly, binds DNA as a monomer. Interacts with NR0B1; represses ESRRB activity at the GATA6 promoter. Interacts with NANOG; reciprocally modulates their transcriptional activities and activates POU5F1 expression. Interacts with NCOA3; mediates the interaction between ESRRB and RNA polymerase II complexes and allows NCOA3 corecruitment to ESRRB, KLF4, NANOG, and SOX2 enhancer regions to trigger ESRRB-dependent gene activation involved in self-renewal and pluripotency. Interacts with KDM1A; co-occupes the core set of ESRRB targets including ELF5 and EOMES. Interacts with the multiprotein complex Integrator, at least composed of INTS1, INTS2, INTS3, INTS4, INTS5, INTS6, INTS7, INTS8, INTS9/RC74, INTS10, INTS11/CPSF3L and INTS12; ESRRB is probably not a core component of the integrator complex and associates to integrator via its interaction with INTS1 and INTS9; attracts the transcriptional machinery. Interacts with JARID2. Interacts with POU5F1; recruits ESRRB near the POU5F1-SOX2 element in the NANOG proximal promoter leading to activation of NANOG expression; the interaction is DNA independent. Post-translationally, acetylated by PCAF/KAT2 (in vitro).

The protein resides in the nucleus. Its subcellular location is the cytoplasm. It localises to the chromosome. Its function is as follows. Transcription factor that binds a canonical ESRRB recognition (ERRE) sequence 5'TCAAGGTCA-3' localized on promoter and enhancer of targets genes regulating their expression or their transcription activity. Plays a role, in a LIF independent manner, in maintainance of self-renewal and pluripotency of embryonic and trophoblast stem cells through different signaling pathways including FGF signaling pathway and Wnt signaling pathways. Involved in morula development (2-16 cells embryos) by acting as a regulator at the 8-cell stage. Upon FGF signaling pathway activation, interacts with KDM1A by directly binding to enhancer site of ELF5 and EOMES and activating their transcription leading to self-renewal of trophoblast stem cells. Also regulates expression of multiple rod-specific genes and is required for survival of this cell type. Plays a role as transcription factor activator of GATA6, NR0B1, POU5F1 and PERM1. Plays a role as transcription factor repressor of NFE2L2 transcriptional activity and ESR1 transcriptional activity. During mitosis remains bound to a subset of interphase target genes, including pluripotency regulators, through the canonical ESRRB recognition (ERRE) sequence, leading to their transcriptional activation in early G1 phase. Can coassemble on structured DNA elements with other transcription factors like SOX2, POU5F1, KDM1A and NCOA3 to trigger ESRRB-dependent gene activation. This mechanism, in the case of SOX2 corecruitment prevents the embryonic stem cells (ESCs) to epiblast stem cells (EpiSC) transition through positive regulation of NR0B1 that inhibits the EpiSC transcriptional program. Also plays a role inner ear development by controlling expression of ion channels and transporters and in early placentation. The sequence is that of Steroid hormone receptor ERR2 from Rattus norvegicus (Rat).